The following is a 230-amino-acid chain: Cyclin-dependent kinase inhibitor rum1 (230 aa).

Disordered regions lie at residues 1 to 25 (MEPSTPPMRGLCTPSTPESPGSFKG), 43 to 118 (PESD…DGLY), and 188 to 230 (SRVP…NLLR). Residue threonine 13 is modified to Phosphothreonine; by MAPK. Serine 19 is subject to Phosphoserine; by MAPK. Phosphothreonine; by cdc2 is present on residues threonine 58 and threonine 62. The interval 67-147 (LLPNLMLQDR…TFKPKLLFAD (81 aa)) is CDK inhibitory and cyclin-binding. Over residues 78-91 (NSLERCMEEDREHN) the composition is skewed to basic and acidic residues. The segment covering 93–102 (FLSSSDNQLL) has biased composition (polar residues). Residues 101–230 (LLSRKKRKPT…KDENRHNLLR (130 aa)) are required for activity as a cdc2 kinase inhibitor. The segment covering 188-199 (SRVPSSSSGSFV) has biased composition (low complexity). Basic and acidic residues predominate over residues 219–230 (NTKDENRHNLLR).

As to quaternary structure, interacts with cdc13, cig2 and pop1. Phosphorylated by cig1-associated cdc2 which leads to increased stability. Phosphorylation by MAPK reduces cdc2 kinase inhibitor ability.

Its subcellular location is the nucleus. In terms of biological role, regulator of cell cycle G1 phase progression. Ensures the correct sequence of S phase and mitosis in the cell by acting as an inhibitor of the cdc2 mitotic kinase. Probably interacts with cdc2 to inhibit its action until the cell mass for Start is reached. Determines the length of the pre-Start G1 period and prevents mitosis from happening in early G1 cells. Required for maintaining pheromone-induced G1 arrest. Acts as an adapter protein since interaction with cdc13 promotes cyclin proteolysis during G1. Becomes a target for degradation at the G1/S phase transition, following phosphorylation by cig1-associated cdc2 at the G1/S phase transition. In Schizosaccharomyces pombe (strain 972 / ATCC 24843) (Fission yeast), this protein is Cyclin-dependent kinase inhibitor rum1 (rum1).